We begin with the raw amino-acid sequence, 617 residues long: Chaperone protein HscA homolog (617 aa).

The protein belongs to the heat shock protein 70 family.

In terms of biological role, chaperone involved in the maturation of iron-sulfur cluster-containing proteins. Has a low intrinsic ATPase activity which is markedly stimulated by HscB. In Vibrio campbellii (strain ATCC BAA-1116), this protein is Chaperone protein HscA homolog.